The primary structure comprises 203 residues: uncharacterized protein (203 aa).

Positions 174–203 (LASSKNPRARSPGLDPLGSSETLWSHRGGH) are disordered.

This is an uncharacterized protein from Homo sapiens (Human).